The following is a 103-amino-acid chain: Salivary thrombin inhibitor anophelin (103 aa).

The N-terminal stretch at 1–21 is a signal peptide; the sequence is MASKLFVLAFLCLALVVVVQS. The disordered stretch occupies residues 24–103; the sequence is QYARGDVPTY…PAASSSESDE (80 aa). The tract at residues 56 to 68 is blocks exosite I of host thrombin; it reads EEFDPSLLEEHAD. A blocks active site cleft of host thrombin in a reverse direction compared to substrates region spans residues 74-77; it reads DPGR. Over residues 91-103 the composition is skewed to low complexity; sequence ASAPAASSSESDE.

Belongs to the anophelin family. As to quaternary structure, interacts with human F2 (thrombin); the interaction results in thrombin inhibition. Female salivary gland (at protein level). Not detected in female midgut, head, carcass and male tissues (at protein level).

Its subcellular location is the secreted. With respect to regulation, increasing concentration of NaCl decreases affinity for thrombin. Its function is as follows. Salivary protein with anticoagulant activity that inhibits host thrombin (F2); binds to the proteinase in a reverse orientation (opposite to substrates). This chain is Salivary thrombin inhibitor anophelin, found in Anopheles gambiae (African malaria mosquito).